The chain runs to 584 residues: MQPVFSRFPYASKSGFISLASRGYAVSRNSGSSIKSNLRSKPRADTRWNTKAKPPVKNRKSNGKGDHRSHSRSDSRAKPSQEQTQQQFQYGEYGKLSEGDPKILERSKRLVSKINDFSQLKILPEVRDKLMEVISSESLLNKNLLDVKYNPKENNVQEFKKHLKPSPIQTTAIYQTSKTLMDPQLQVRLIAAETGSGKTMAYLIPLVDYLKRTEMENPSWETLKDKAIVRSIILLPTHELVEQVYQTVSKLEPALGMHTYKWDAGSSYKGFVEALKGRIDIMVTTPGKILSLFNISMVNRPDRILSQVKFLVMDEADTLLDKSWVEDSYSTIKHMQNLNHVLFCSATIPKEFQKTITRLFPTVGVIASPNLHKINHKNQIKLINADMAPYKGSKTKALAQILYSINRDNIDPGFEKRVVIFVNEKENVPLVATKLANQYGHDVVALTGNDSVEERLEKIKPFMDPPKKMTTRKSEKVTTENTVTMKIPNSNIVIEEIPEDNEAFVESTLKVLVTTDVLARGINFRGCRYVVLYDIPNTPVDLVHRVGRTGRMNQKGSVFIITGKRVKNWVKAIPSIVSKNVSIS.

Residues 1–49 (MQPVFSRFPYASKSGFISLASRGYAVSRNSGSSIKSNLRSKPRADTRWN) constitute a mitochondrion transit peptide. Residues 28–39 (RNSGSSIKSNLR) show a composition bias toward polar residues. A disordered region spans residues 28 to 92 (RNSGSSIKSN…QTQQQFQYGE (65 aa)). The segment covering 63–79 (GKGDHRSHSRSDSRAKP) has biased composition (basic and acidic residues). Residues 162-169 (HLKPSPIQ) carry the Q motif motif. One can recognise a Helicase ATP-binding domain in the interval 179–366 (TLMDPQLQVR…TRLFPTVGVI (188 aa)). An ATP-binding site is contributed by 192–199 (AETGSGKT). Residues 314–317 (DEAD) carry the DEAD box motif. A Helicase C-terminal domain is found at 397–584 (ALAQILYSIN…SIVSKNVSIS (188 aa)).

This sequence belongs to the DEAD box helicase family. MRH4 subfamily.

Its subcellular location is the mitochondrion. It catalyses the reaction ATP + H2O = ADP + phosphate + H(+). Functionally, ATP-binding RNA helicase involved in mitochondrial RNA metabolism. Required for maintenance of mitochondrial DNA. The protein is ATP-dependent RNA helicase MRH4, mitochondrial (MRH4) of Kluyveromyces lactis (strain ATCC 8585 / CBS 2359 / DSM 70799 / NBRC 1267 / NRRL Y-1140 / WM37) (Yeast).